The sequence spans 229 residues: Large ribosomal subunit protein uL1 (229 aa).

This sequence belongs to the universal ribosomal protein uL1 family. Part of the 50S ribosomal subunit.

Functionally, binds directly to 23S rRNA. The L1 stalk is quite mobile in the ribosome, and is involved in E site tRNA release. Its function is as follows. Protein L1 is also a translational repressor protein, it controls the translation of the L11 operon by binding to its mRNA. This chain is Large ribosomal subunit protein uL1, found in Histophilus somni (strain 2336) (Haemophilus somnus).